A 60-amino-acid polypeptide reads, in one-letter code: uncharacterized protein (60 aa).

A helical transmembrane segment spans residues 33-55 (FRLLRGIFLITLVIWTVVWLKLL).

This sequence belongs to the HHV-5 UL2 protein family.

The protein resides in the host membrane. This is an uncharacterized protein from Human cytomegalovirus (strain AD169) (HHV-5).